Here is a 498-residue protein sequence, read N- to C-terminus: NADH-quinone oxidoreductase subunit N 2 (498 aa).

The next 14 helical transmembrane spans lie at Val19–Phe39, Ile47–Trp67, Tyr83–Leu103, Ser114–Ala134, Leu136–Phe156, Leu171–Ala191, Ile215–Ala235, Pro249–Leu269, Ile282–Ala302, Ile317–Ala337, Val345–Ala365, Leu389–Phe409, Trp420–Phe440, and Ala468–Ile488.

It belongs to the complex I subunit 2 family. In terms of assembly, NDH-1 is composed of 14 different subunits. Subunits NuoA, H, J, K, L, M, N constitute the membrane sector of the complex.

Its subcellular location is the cell membrane. It catalyses the reaction a quinone + NADH + 5 H(+)(in) = a quinol + NAD(+) + 4 H(+)(out). Functionally, NDH-1 shuttles electrons from NADH, via FMN and iron-sulfur (Fe-S) centers, to quinones in the respiratory chain. The immediate electron acceptor for the enzyme in this species is believed to be ubiquinone. Couples the redox reaction to proton translocation (for every two electrons transferred, four hydrogen ions are translocated across the cytoplasmic membrane), and thus conserves the redox energy in a proton gradient. In Roseiflexus castenholzii (strain DSM 13941 / HLO8), this protein is NADH-quinone oxidoreductase subunit N 2.